The following is a 430-amino-acid chain: Enolase (430 aa).

Gln-167 provides a ligand contact to (2R)-2-phosphoglycerate. Glu-209 serves as the catalytic Proton donor. Mg(2+) contacts are provided by Asp-246, Glu-287, and Asp-314. Residues Lys-339, Arg-368, Ser-369, and Lys-390 each contribute to the (2R)-2-phosphoglycerate site. The active-site Proton acceptor is Lys-339.

It belongs to the enolase family. Mg(2+) serves as cofactor.

It is found in the cytoplasm. Its subcellular location is the secreted. The protein resides in the cell surface. The enzyme catalyses (2R)-2-phosphoglycerate = phosphoenolpyruvate + H2O. The protein operates within carbohydrate degradation; glycolysis; pyruvate from D-glyceraldehyde 3-phosphate: step 4/5. Catalyzes the reversible conversion of 2-phosphoglycerate (2-PG) into phosphoenolpyruvate (PEP). It is essential for the degradation of carbohydrates via glycolysis. The sequence is that of Enolase from Prochlorococcus marinus (strain MIT 9301).